We begin with the raw amino-acid sequence, 411 residues long: Translation initiation factor 2 subunit gamma (411 aa).

The tr-type G domain maps to 9–203 (QAEVNIGMVG…AIEDFIPTPK (195 aa)). The segment at 18 to 25 (GHVDHGKT) is G1. Mg(2+) contacts are provided by aspartate 21, threonine 25, glycine 46, and threonine 48. 21–26 (DHGKTT) contributes to the GTP binding site. The G2 stretch occupies residues 46-50 (GITIK). Residues cysteine 61, cysteine 64, cysteine 73, and cysteine 76 each contribute to the Zn(2+) site. A G3 region spans residues 90-93 (DAPG). Residues 146 to 149 (NKIE) and 181 to 183 (SAL) each bind GTP. The G4 stretch occupies residues 146-149 (NKIE). A G5 region spans residues 181 to 183 (SAL).

This sequence belongs to the TRAFAC class translation factor GTPase superfamily. Classic translation factor GTPase family. EIF2G subfamily. Heterotrimer composed of an alpha, a beta and a gamma chain. Mg(2+) is required as a cofactor.

The catalysed reaction is GTP + H2O = GDP + phosphate + H(+). Functionally, eIF-2 functions in the early steps of protein synthesis by forming a ternary complex with GTP and initiator tRNA. This chain is Translation initiation factor 2 subunit gamma, found in Pyrococcus abyssi (strain GE5 / Orsay).